The chain runs to 68 residues: Large ribosomal subunit protein uL29 (68 aa).

The protein belongs to the universal ribosomal protein uL29 family.

The chain is Large ribosomal subunit protein uL29 from Leuconostoc citreum (strain KM20).